The following is a 328-amino-acid chain: RNA-binding protein KhpB (328 aa).

The tract at residues 3 to 53 (VFTGSTVEEAIQKGLKELDIPRMKAHIKVISREKKGFLGLFGKKPAQVDIE) is jag_N domain. Residues 54 to 180 (AISETTVVKA…GLKVETNFDI (127 aa)) are linker. Thr89 carries the post-translational modification Phosphothreonine. The 78-residue stretch at 181 to 258 (EQVATEVMAY…SRTFYVTINV (78 aa)) folds into the KH domain. Residues 263 to 328 (EHRAEVLQTY…PNRYVVVDTE (66 aa)) form the R3H domain.

Belongs to the KhpB RNA-binding protein family. Interacts with KhpA; the 2 proteins colocalize throughout the cell cycle, with some increase at midcell in dividing cells. Interacts with StkP which phosphorylates it, interacts with MltG, MreC, RodZ and YidC2. Phosphorylated on Thr-89 by StkP; there is another poorly phosphorylated residue in the protein. Dephosphorylated by PhpP.

It is found in the cytoplasm. A probable RNA chaperone. Forms a complex with KhpA which binds to cellular RNA and controls its expression. Plays a role in peptidoglycan (PG) homeostasis and cell length regulation. Functionally, forms a complex with KhpA which presumably binds to about 170 cellular RNAs (mRNA, tRNA intergenic RNA and sRNAs); the proteins alone each bind the same set of RNAs. Suppresses the requirement for PBP2b (penA, a transpeptidase) in peripheral peptidoglycan (PG) synthesis. May function as a pleiotropic RNA chaperone controlling pneumococcal cell division, including PG homeostasis and regulating peripheral PG synthesis by the elongasome. This chain is RNA-binding protein KhpB, found in Streptococcus pneumoniae serotype 2 (strain D39 / NCTC 7466).